The sequence spans 842 residues: Synaptonemal complex protein 2-like (842 aa).

Disordered regions lie at residues 451-473, 505-560, 619-666, and 715-738; these read GSLE…EPEQ, FARD…KQRV, STQK…SSLE, and EDAP…PGSV. Basic and acidic residues-rich tracts occupy residues 458–470 and 505–525; these read TEER…KQDE and FARD…HDLL. Positions 543 to 559 are enriched in basic residues; the sequence is NHKRKSLRTYSQRKKQR. Composition is skewed to basic and acidic residues over residues 624–633 and 643–655; these read GLEKPERRGS and RVTD…EPRS.

It belongs to the SYCP2 family. In terms of tissue distribution, specifically expressed in oocytes.

The protein resides in the nucleus. It localises to the chromosome. Its subcellular location is the centromere. Oocyte-specific protein that localizes to centromeres at the dictyate stage and regulates the survival of primordial oocytes. The chain is Synaptonemal complex protein 2-like from Mus musculus (Mouse).